The primary structure comprises 249 residues: 5-amino-6-(5-phospho-D-ribitylamino)uracil phosphatase YcsE (249 aa).

Residue D16 is the Nucleophile of the active site. D16 contacts Mg(2+). Position 17 (M17) interacts with phosphate. A Mg(2+)-binding site is contributed by D18. Phosphate is bound by residues 50–51 (TG) and K177. D200 and S201 together coordinate Mg(2+). N203 is a phosphate binding site.

The protein belongs to the HAD-like hydrolase superfamily. Cof family. It depends on Mg(2+) as a cofactor.

It catalyses the reaction 5-amino-6-(5-phospho-D-ribitylamino)uracil + H2O = 5-amino-6-(D-ribitylamino)uracil + phosphate. It functions in the pathway cofactor biosynthesis; riboflavin biosynthesis; 5-amino-6-(D-ribitylamino)uracil from GTP: step 4/4. Its function is as follows. Catalyzes the dephosphorylation of the riboflavin precursor 5-amino-6-(5-phospho-D-ribitylamino)uracil and of flavin mononucleotide (FMN) in vitro. To a lesser extent, may also catalyze the dephosphorylation of a broad range of substrates such as phosphorylated sugars and triphosphate nucleotides in vitro. This is 5-amino-6-(5-phospho-D-ribitylamino)uracil phosphatase YcsE (ycsE) from Bacillus subtilis (strain 168).